Consider the following 250-residue polypeptide: tRNA (guanine-N(1)-)-methyltransferase (250 aa).

Residues G116 and 136-141 each bind S-adenosyl-L-methionine; that span reads IGDYVL.

Belongs to the RNA methyltransferase TrmD family. Homodimer.

Its subcellular location is the cytoplasm. It carries out the reaction guanosine(37) in tRNA + S-adenosyl-L-methionine = N(1)-methylguanosine(37) in tRNA + S-adenosyl-L-homocysteine + H(+). Functionally, specifically methylates guanosine-37 in various tRNAs. The chain is tRNA (guanine-N(1)-)-methyltransferase from Pseudomonas putida (strain ATCC 47054 / DSM 6125 / CFBP 8728 / NCIMB 11950 / KT2440).